The primary structure comprises 698 residues: DNA ligase (698 aa).

NAD(+) is bound by residues 40 to 44, 89 to 90, and Glu-123; these read DDVYD and SL. Residue Lys-125 is the N6-AMP-lysine intermediate of the active site. 4 residues coordinate NAD(+): Arg-146, Glu-184, Lys-300, and Lys-324. Residues Cys-417, Cys-420, Cys-435, and Cys-441 each contribute to the Zn(2+) site. The 81-residue stretch at 618–698 folds into the BRCT domain; that stretch reads SSASPVAGKA…EWLALTGAAD (81 aa).

Belongs to the NAD-dependent DNA ligase family. LigA subfamily. Mg(2+) serves as cofactor. Requires Mn(2+) as cofactor.

The catalysed reaction is NAD(+) + (deoxyribonucleotide)n-3'-hydroxyl + 5'-phospho-(deoxyribonucleotide)m = (deoxyribonucleotide)n+m + AMP + beta-nicotinamide D-nucleotide.. DNA ligase that catalyzes the formation of phosphodiester linkages between 5'-phosphoryl and 3'-hydroxyl groups in double-stranded DNA using NAD as a coenzyme and as the energy source for the reaction. It is essential for DNA replication and repair of damaged DNA. The sequence is that of DNA ligase from Paramagnetospirillum magneticum (strain ATCC 700264 / AMB-1) (Magnetospirillum magneticum).